Here is a 343-residue protein sequence, read N- to C-terminus: Uroporphyrinogen decarboxylase (343 aa).

Substrate is bound by residues 23 to 27, Asp-73, Tyr-151, Ser-206, and His-319; that span reads RQAGR.

This sequence belongs to the uroporphyrinogen decarboxylase family. In terms of assembly, homodimer.

The protein localises to the cytoplasm. It carries out the reaction uroporphyrinogen III + 4 H(+) = coproporphyrinogen III + 4 CO2. It functions in the pathway porphyrin-containing compound metabolism; protoporphyrin-IX biosynthesis; coproporphyrinogen-III from 5-aminolevulinate: step 4/4. Catalyzes the decarboxylation of four acetate groups of uroporphyrinogen-III to yield coproporphyrinogen-III. The protein is Uroporphyrinogen decarboxylase of Sulfurimonas denitrificans (strain ATCC 33889 / DSM 1251) (Thiomicrospira denitrificans (strain ATCC 33889 / DSM 1251)).